The sequence spans 155 residues: Small ribosomal subunit protein eS19 (155 aa).

The protein belongs to the eukaryotic ribosomal protein eS19 family. Component of the small ribosomal subunit.

It is found in the cytoplasm. Its function is as follows. Component of the small ribosomal subunit. The ribosome is a large ribonucleoprotein complex responsible for the synthesis of proteins in the cell. Required for proper maturation of the small (40S) ribosomal subunit. The chain is Small ribosomal subunit protein eS19 (RPS19) from Entamoeba histolytica (strain ATCC 30459 / HM-1:IMSS / ABRM).